The sequence spans 468 residues: uncharacterized protein (468 aa).

The signal sequence occupies residues 1 to 19; that stretch reads MRVLSVLLVALTVAGSAYS. N-linked (GlcNAc...) asparagine glycosylation is found at asparagine 86 and asparagine 334. The segment at 401–421 is disordered; that stretch reads NPSTNLPETSPPTEQPTAPPA. A compositionally biased stretch (pro residues) spans 409–421; sequence TSPPTEQPTAPPA. N-linked (GlcNAc...) asparagine glycosylation occurs at asparagine 435. The GPI-like-anchor amidated asparagine moiety is linked to residue asparagine 444. A propeptide spans 445–468 (removed in mature form); it reads SASSIEMSKLVVAILSLFILAFFH.

It localises to the cell membrane. This is an uncharacterized protein from Dictyostelium discoideum (Social amoeba).